The sequence spans 216 residues: Large ribosomal subunit protein uL3 (216 aa).

Positions 137–157 (GASHGAHKNHRKPGSIGGAST) are disordered.

Belongs to the universal ribosomal protein uL3 family. In terms of assembly, part of the 50S ribosomal subunit. Forms a cluster with proteins L14 and L19.

In terms of biological role, one of the primary rRNA binding proteins, it binds directly near the 3'-end of the 23S rRNA, where it nucleates assembly of the 50S subunit. This is Large ribosomal subunit protein uL3 from Paenarthrobacter aurescens (strain TC1).